The primary structure comprises 492 residues: Serine incorporator 4 (492 aa).

The next 10 membrane-spanning stretches (helical) occupy residues 59–79 (YILL…KTVV), 113–133 (AVYR…VLLV), 148–168 (SFWS…FCIP), 179–199 (IGIC…TAFA), 219–239 (GVSL…VLLF), 254–274 (LLSL…APCI), 281–301 (SGLL…FSAL), 330–350 (IPDT…VLFA), 421–441 (GFHF…TNWF), and 464–484 (VASC…PLLA).

This sequence belongs to the TDE1 family.

The protein resides in the membrane. Functionally, incorporates a polar amino acid serine into membranes and facilitates the synthesis of two serine-derived lipids, phosphatidylserine and sphingolipids. The sequence is that of Serine incorporator 4 (Serinc4) from Mus musculus (Mouse).